The sequence spans 420 residues: Histidine--tRNA ligase (420 aa).

The protein belongs to the class-II aminoacyl-tRNA synthetase family. In terms of assembly, homodimer.

It is found in the cytoplasm. The catalysed reaction is tRNA(His) + L-histidine + ATP = L-histidyl-tRNA(His) + AMP + diphosphate + H(+). This Thermotoga petrophila (strain ATCC BAA-488 / DSM 13995 / JCM 10881 / RKU-1) protein is Histidine--tRNA ligase.